A 309-amino-acid polypeptide reads, in one-letter code: Aspartate carbamoyltransferase catalytic subunit (309 aa).

The carbamoyl phosphate site is built by Arg-57 and Thr-58. Lys-86 serves as a coordination point for L-aspartate. Positions 107, 135, and 138 each coordinate carbamoyl phosphate. Positions 168 and 229 each coordinate L-aspartate. Carbamoyl phosphate is bound by residues Leu-269 and Pro-270.

The protein belongs to the aspartate/ornithine carbamoyltransferase superfamily. ATCase family. In terms of assembly, heterooligomer of catalytic and regulatory chains.

The enzyme catalyses carbamoyl phosphate + L-aspartate = N-carbamoyl-L-aspartate + phosphate + H(+). It functions in the pathway pyrimidine metabolism; UMP biosynthesis via de novo pathway; (S)-dihydroorotate from bicarbonate: step 2/3. Its function is as follows. Catalyzes the condensation of carbamoyl phosphate and aspartate to form carbamoyl aspartate and inorganic phosphate, the committed step in the de novo pyrimidine nucleotide biosynthesis pathway. The polypeptide is Aspartate carbamoyltransferase catalytic subunit (Methanopyrus kandleri (strain AV19 / DSM 6324 / JCM 9639 / NBRC 100938)).